A 697-amino-acid chain; its full sequence is T-related protein (697 aa).

Positions 1-60 (MTTSHILSAVDPTTGLSGNVSGGGGGGGAGGGAGSGSPQHVTHNGHGHGHGLGGVAAVSG) are disordered. Composition is skewed to gly residues over residues 20 to 35 (VSGGGGGGGAGGGAGS) and 50 to 60 (HGLGGVAAVSG). The T-box DNA-binding region spans 96-264 (LWLRFQNLTN…YNPFAKAFLD (169 aa)). Positions 316 to 330 (SVSSAESVGPSSGGS) are enriched in low complexity. 2 disordered regions span residues 316-407 (SVSS…GGIG) and 462-488 (VCSGRNISSHNSPSPTNGSPSYTTSSP). Over residues 337-351 (SLSSRSVAPTRTTPY) the composition is skewed to polar residues. Low complexity-rich tracts occupy residues 352-373 (SRPRVVSGSGSNGSAGNASSTS), 381-401 (QTPTSLHSTSTGSVSTSVSSS), and 469-488 (SSHNSPSPTNGSPSYTTSSP).

It is found in the nucleus. In terms of biological role, required for the specification of the hindgut and anal pads. This chain is T-related protein (byn), found in Drosophila melanogaster (Fruit fly).